A 298-amino-acid polypeptide reads, in one-letter code: Protoheme IX farnesyltransferase (298 aa).

8 helical membrane passes run 16–36 (VVALIVFTALVGMFLAIPGMP), 45–65 (ALGFLGIWLAASAAAAINQLL), 97–117 (VLIVISMTILVVWVNVITAVL), 141–161 (IVIGGLAGATPPMLGWAAVTG), 172–192 (SLLVLIIFIWTPPHFWALAIF), 223–243 (VLLAIVTLLPVAVGMSGVFYL), 244–264 (GGAVVLNAVFLWYAWRMLDPP), and 277–297 (VVYLMALFAFLMVDHLLLPWV).

This sequence belongs to the UbiA prenyltransferase family. Protoheme IX farnesyltransferase subfamily.

The protein resides in the cell inner membrane. The enzyme catalyses heme b + (2E,6E)-farnesyl diphosphate + H2O = Fe(II)-heme o + diphosphate. It functions in the pathway porphyrin-containing compound metabolism; heme O biosynthesis; heme O from protoheme: step 1/1. Converts heme B (protoheme IX) to heme O by substitution of the vinyl group on carbon 2 of heme B porphyrin ring with a hydroxyethyl farnesyl side group. This is Protoheme IX farnesyltransferase from Xanthomonas campestris pv. campestris (strain 8004).